The primary structure comprises 245 residues: DNA polymerase sliding clamp (245 aa).

This sequence belongs to the PCNA family. As to quaternary structure, homotrimer. The subunits circularize to form a toroid; DNA passes through its center. Replication factor C (RFC) is required to load the toroid on the DNA.

Its function is as follows. Sliding clamp subunit that acts as a moving platform for DNA processing. Responsible for tethering the catalytic subunit of DNA polymerase and other proteins to DNA during high-speed replication. In Methanosarcina mazei (strain ATCC BAA-159 / DSM 3647 / Goe1 / Go1 / JCM 11833 / OCM 88) (Methanosarcina frisia), this protein is DNA polymerase sliding clamp.